Reading from the N-terminus, the 413-residue chain is MNTLANWKKFLLVAVIICFLVPIMTKAEIAEADTSSELIVSEAKNLLGYQYKYGGETPKEGFDPSGLIQYVFSKADIHLPRSVNDQYKIGTAVKPENLKPGDILFFKKEGSTGTVPTHDALYIGDGQMVHSTQSKGVIITNYKKSSYWSGTYIGARRIAADPATADVPVVQEAEKYIGVPYVFGGSTPSEGFDCSGLVQYVFQQALGIYLPRSAEQQWAVGEKVAPQNIKPGDVVYFSNTYKTGISHAGIYAGAGRFIQASRSEKVTISYLSEDYWKSKMTGIRRFDNLTIPKENPIVSEATLYVGEVPYKQGGVTPETGFDTAGFVQYVYQKAAGISLPRYATSQYNAGTKIEKADLKPGDIVFFQSTSLNPSIYIGNGQVVHVTLSNGVTITNMNTSTYWKDKYAGSIRVQ.

An N-terminal signal peptide occupies residues 1 to 32 (MNTLANWKKFLLVAVIICFLVPIMTKAEIAEA). 3 NlpC/P60 domains span residues 33–159 (DTSS…RRIA), 163–287 (ATAD…RRFD), and 291–413 (IPKE…IRVQ). Cys-194 functions as the Nucleophile in the catalytic mechanism. The active-site Proton acceptor is the His-247. Gln-259 is a catalytic residue.

This sequence belongs to the peptidase C40 family.

It is found in the secreted. It localises to the cell wall. Its activity is regulated as follows. Inhibited by pretreatment with 1 mM 4-(hydroxymercuri)benzoate, a sulfhydryl inhibitor. Its function is as follows. Cleaves, in an endo-type manner, the gamma-glutamyl bond between D-glutamate and L-glutamate of poly-gamma-glutamate (PGA). This chain is Gamma-DL-glutamyl hydrolase (pgdS), found in Bacillus subtilis (strain 168).